Here is a 383-residue protein sequence, read N- to C-terminus: Probable endopolygalacturonase C (383 aa).

The N-terminal stretch at 1–16 (MVRQLILISSLLAAVA) is a signal peptide. Positions 17–40 (VRAPADPAHPMVTEAPDVNLVEKR) are excised as a propeptide. Cysteines 44 and 62 form a disulfide. 2 PbH1 repeats span residues 175–206 (STDL…DIGE) and 207–228 (STYI…AINS). Aspartate 221 (proton donor) is an active-site residue. Cysteine 223 and cysteine 239 are disulfide-bonded. The active site involves histidine 243. 2 PbH1 repeats span residues 253-279 (RDDN…RIKT) and 287-309 (VSEV…VIEQ). Asparagine 260 carries N-linked (GlcNAc...) asparagine glycosylation. Disulfide bonds link cysteine 348–cysteine 353 and cysteine 372–cysteine 381.

Belongs to the glycosyl hydrolase 28 family.

The protein resides in the secreted. The enzyme catalyses (1,4-alpha-D-galacturonosyl)n+m + H2O = (1,4-alpha-D-galacturonosyl)n + (1,4-alpha-D-galacturonosyl)m.. Functionally, involved in maceration and soft-rotting of plant tissue. Hydrolyzes the 1,4-alpha glycosidic bonds of de-esterified pectate in the smooth region of the plant cell wall. This Aspergillus niger protein is Probable endopolygalacturonase C (pgaC).